Reading from the N-terminus, the 630-residue chain is MDLSLLRSLTGPHDLKSLSPEQVRALAQEVRQEILRVVSANGGHLASNLGVVELTIALHRVFSCPHDVVVWDVGHQCYAHKLLTGRAGRFHTLRQKDGISGFPRRDESPYDAFGTGHSSTALSAASGILSALRYRGKSGKVVAVVGDGALTAGLAFEALLNVGRSCSDLIVILNDNKMSISPNTGSFSRYLSTLTVKGPYQKLKTRLRRALQTVPLVGRPACRALSRLKRSARTLLYQSNIFADFGFEYVGPLNGHHIEDLERVLNDAKKLTRPTLLHVQTVKGKGYPFAEQNPTDFHGVGPFNLAEGIVEKKDALTFTEAFSHTLLNAARTDDRVVAITAAMTGGTGLGLFSHIYPERFFDVGIAEQHAVTFAAGLACAGVKPVVAVYSTFLQRAVDQVIHDVAVQNLPVIFALDRAGAVPHDGETHQGLFDLSILRAVPNINILCPASAHELSLLFGWALAQDTPVAIRYPKALCPPEEDGFSTPVHTGRGVLITRENECNVLLVCTGGVFPEVTAAANTLARKGIFADIYNVRFVKPVDEDYFLDLVGRYRSVLFVEDGVKIGGIAEALQALLNTRHPAPCSDVLAFQDMFYPHGSRAQVLAAAGLSAPHIAARAEWLLAHSVGQIR.

Residues His75 and 116–118 (GHS) contribute to the thiamine diphosphate site. Asp147 contacts Mg(2+). Residues 148-149 (GA), Asn176, Tyr287, and Glu367 contribute to the thiamine diphosphate site. Residue Asn176 participates in Mg(2+) binding.

Belongs to the transketolase family. DXPS subfamily. As to quaternary structure, homodimer. It depends on Mg(2+) as a cofactor. Thiamine diphosphate serves as cofactor.

The catalysed reaction is D-glyceraldehyde 3-phosphate + pyruvate + H(+) = 1-deoxy-D-xylulose 5-phosphate + CO2. It participates in metabolic intermediate biosynthesis; 1-deoxy-D-xylulose 5-phosphate biosynthesis; 1-deoxy-D-xylulose 5-phosphate from D-glyceraldehyde 3-phosphate and pyruvate: step 1/1. In terms of biological role, catalyzes the acyloin condensation reaction between C atoms 2 and 3 of pyruvate and glyceraldehyde 3-phosphate to yield 1-deoxy-D-xylulose-5-phosphate (DXP). The protein is 1-deoxy-D-xylulose-5-phosphate synthase of Treponema pallidum (strain Nichols).